Consider the following 1747-residue polypeptide: Retroelement silencing factor 1 (1747 aa).

A Glycyl lysine isopeptide (Lys-Gly) (interchain with G-Cter in SUMO2) cross-link involves residue Lys216. Ser221 bears the Phosphoserine mark. Polar residues predominate over residues 261–272 (TSAVPSQQYATQ). Positions 261–280 (TSAVPSQQYATQTDKRPPPP) are disordered. Lys707 participates in a covalent cross-link: Glycyl lysine isopeptide (Lys-Gly) (interchain with G-Cter in SUMO2). 3 disordered regions span residues 833-856 (PLTQKEKQNESTNGNSEVTPNVNQ), 923-956 (PQKPSLPNQQGIGSREPEKQLDNTTENKDFGFQK), and 1073-1101 (EGSVGQQTTYQTSEDQTADKTSSDSKDPA). A compositionally biased stretch (polar residues) spans 842 to 856 (ESTNGNSEVTPNVNQ). The span at 937–956 (REPEKQLDNTTENKDFGFQK) shows a compositional bias: basic and acidic residues. Over residues 1073 to 1087 (EGSVGQQTTYQTSED) the composition is skewed to polar residues. The span at 1089-1101 (TADKTSSDSKDPA) shows a compositional bias: basic and acidic residues. Lys1136 is covalently cross-linked (Glycyl lysine isopeptide (Lys-Gly) (interchain with G-Cter in SUMO2)). A Phosphoserine modification is found at Ser1145. The interval 1200–1274 (EEKQKEQCSP…KSLPRTEQEL (75 aa)) is disordered. Over residues 1217-1226 (QGERTSDRDV) the composition is skewed to basic and acidic residues. At Thr1240 the chain carries Phosphothreonine. Residues 1242-1261 (PDGKSHFPELQDDSRKDTPK) show a composition bias toward basic and acidic residues. Ser1358 is modified (phosphoserine). Residues Lys1528 and Lys1636 each participate in a glycyl lysine isopeptide (Lys-Gly) (interchain with G-Cter in SUMO2) cross-link. Residues 1686–1716 (KRTQKDSQERDNVNSRLSKRSFSADGFEMLQ) form a disordered region. The segment covering 1689 to 1698 (QKDSQERDNV) has biased composition (basic and acidic residues). Ser1708 is modified (phosphoserine). A Glycyl lysine isopeptide (Lys-Gly) (interchain with G-Cter in SUMO2) cross-link involves residue Lys1723. A Phosphoserine modification is found at Ser1740.

In terms of assembly, interacts with SETDB1.

The protein resides in the nucleus. Its function is as follows. Plays a role in the regulation of imprinted gene expression, regulates repressive epigenetic modifications associated with SETDB1. Required for the recruitment or accumulation of SETDB1 to the endogenous retroviruses (ERVs) and maintenance of repressive chromatin configuration, contributing to a subset of the SETDB1-dependent ERV silencing in embryonic stem cells. The polypeptide is Retroelement silencing factor 1 (Homo sapiens (Human)).